Consider the following 85-residue polypeptide: Putative membrane protein insertion efficiency factor (85 aa).

A disordered region spans residues 66–85 (PLNSGGDDPVPPKLDDNREH).

Belongs to the UPF0161 family.

It localises to the cell inner membrane. Its function is as follows. Could be involved in insertion of integral membrane proteins into the membrane. The protein is Putative membrane protein insertion efficiency factor of Yersinia pestis bv. Antiqua (strain Antiqua).